The following is a 272-amino-acid chain: Transcription factor E2F6 (272 aa).

The segment at 1-62 is binding to corepressors; sequence MSQQRTARRQ…MRKALKVKRP (62 aa). Residues 50-129 mediate DNA binding; the sequence is YVSMRKALKV…SKNHIRWIGS (80 aa). Residues 95-129 carry the DEF box motif; the sequence is KLGVRKRRVYDITNVLDGIELVEKKSKNHIRWIGS. Residues 130 to 222 form a dimerization region; sequence DLNNFGAAPQ…PAPREDSITV (93 aa). A leucine-zipper region spans residues 143–164; the sequence is LQAELSDLSAMEDALDELIKDC. A transcription repression region spans residues 173–272; that stretch reads DDKENERLAY…CPEKEDEPPQ (100 aa). Residues 242 to 272 form a disordered region; that stretch reads HSNGKTNDGIGASPSKSSHPQCPEKEDEPPQ.

The protein belongs to the E2F/DP family. In terms of assembly, forms heterodimers with DP family members TFDP1 or TFDP2. Component of the DRTF1/E2F transcription factor complex. Part of the E2F6.com-1 complex in G0 phase composed of E2F6, MGA, MAX, TFDP1, CBX3, BAT8, EUHMTASE1, RING1, RNF2, MBLR, L3MBTL2 and YAF2. Component of some MLL1/MLL complex, at least composed of the core components KMT2A/MLL1, ASH2L, HCFC1/HCF1, WDR5 and RBBP5, as well as the facultative components BACC1, CHD8, E2F6, HSP70, INO80C, KANSL1, LAS1L, MAX, MCRS1, MGA, KAT8/MOF, PELP1, PHF20, PRP31, RING2, RUVB1/TIP49A, RUVB2/TIP49B, SENP3, TAF1, TAF4, TAF6, TAF7, TAF9 and TEX10.

Its subcellular location is the nucleus. Inhibitor of E2F-dependent transcription. Binds DNA cooperatively with DP proteins through the E2 recognition site, 5'-TTTC[CG]CGC-3'. Has a preference for the 5'-TTTCCCGC-3' E2F recognition site. E2F6 lacks the transcriptional activation and pocket protein binding domains. Appears to regulate a subset of E2F-dependent genes whose products are required for entry into the cell cycle but not for normal cell cycle progression. Represses expression of some meiosis-specific genes, including SLC25A31/ANT4. May silence expression via the recruitment of a chromatin remodeling complex containing histone H3-K9 methyltransferase activity. Overexpression delays the exit of cells from the S-phase. This chain is Transcription factor E2F6, found in Mus musculus (Mouse).